The sequence spans 380 residues: Acyl-coenzyme A diphosphatase NUDT19 (380 aa).

Positions 8 to 264 (WKEAATLIVA…KIWIPPPQFY (257 aa)) constitute a Nudix hydrolase domain. The Nudix box motif lies at 115–136 (SLIPGEVATRICAIRETFEESG). Mg(2+) is bound by residues Glu130 and Glu134. The Microbody targeting signal signature appears at 378–380 (NKL).

The protein belongs to the Nudix hydrolase family. Monomer. Requires Mg(2+) as cofactor. It depends on Mn(2+) as a cofactor.

The protein localises to the peroxisome. It carries out the reaction an acyl-CoA + H2O = an acyl-4'-phosphopantetheine + adenosine 3',5'-bisphosphate + 2 H(+). The catalysed reaction is CoA + H2O = (R)-4'-phosphopantetheine + adenosine 3',5'-bisphosphate + 2 H(+). The enzyme catalyses hexanoyl-CoA + H2O = hexanoyl-4'-phosphopantetheine + adenosine 3',5'-bisphosphate + 2 H(+). It catalyses the reaction octanoyl-CoA + H2O = S-octanoyl-4'-phosphopantetheine + adenosine 3',5'-bisphosphate + 2 H(+). It carries out the reaction butanoyl-CoA + H2O = S-butanoyl-4'-phosphopantetheine + adenosine 3',5'-bisphosphate + 2 H(+). The catalysed reaction is propanoyl-CoA + H2O = propanoyl-4'-phosphopantetheine + adenosine 3',5'-bisphosphate + 2 H(+). The enzyme catalyses malonyl-CoA + H2O = malonyl-4'-phosphopantetheine + adenosine 3',5'-bisphosphate + 2 H(+). It catalyses the reaction succinyl-CoA + H2O = succinyl-4'-phosphopantetheine + adenosine 3',5'-bisphosphate + 2 H(+). It carries out the reaction choloyl-CoA + H2O = S-choloyl-4'-phosphopantetheine + adenosine 3',5'-bisphosphate + 2 H(+). The catalysed reaction is 4,8-dimethylnonanoyl-CoA + H2O = S-(4,8-dimethylnonanoyl)-4'-phosphopantetheine + adenosine 3',5'-bisphosphate + 2 H(+). The enzyme catalyses (9Z,12Z,15Z)-octadecatrienoyl-CoA + H2O = S-(9Z,12Z,15Z-octadecatrienoyl)-4'-phosphopantetheine + adenosine 3',5'-bisphosphate + 2 H(+). It catalyses the reaction (9Z,12Z)-octadecadienoyl-CoA + H2O = S-(9Z,12Z-octadecadienoyl)-4'-phosphopantetheine + adenosine 3',5'-bisphosphate + 2 H(+). It carries out the reaction (9Z)-hexadecenoyl-CoA + H2O = S-(9Z-hexadecenoyl)-4'-phosphopantetheine + adenosine 3',5'-bisphosphate + 2 H(+). The catalysed reaction is (9Z)-tetradecenoyl-CoA + H2O = S-(9Z-tetradecenoyl)-4'-phosphopantetheine + adenosine 3',5'-bisphosphate + 2 H(+). The enzyme catalyses (6Z)-octenoyl-CoA + H2O = S-(6Z-octenoyl)-4'-phosphopantetheine + adenosine 3',5'-bisphosphate + 2 H(+). It catalyses the reaction hexadecanoyl-CoA + H2O = S-hexadecanoyl-4'-phosphopantetheine + adenosine 3',5'-bisphosphate + 2 H(+). It carries out the reaction tetradecanoyl-CoA + H2O = tetradecanoyl-4'-phosphopantetheine + adenosine 3',5'-bisphosphate + 2 H(+). The catalysed reaction is dodecanoyl-CoA + H2O = S-dodecanoyl-4'-phosphopantetheine + adenosine 3',5'-bisphosphate + 2 H(+). The enzyme catalyses a 5'-end CoA-ribonucleoside in mRNA + H2O = a 5'-end phospho-adenosine-phospho-ribonucleoside in mRNA + (R)-4'-phosphopantetheine + 2 H(+). Its function is as follows. Fatty acyl-coenzyme A (CoA) diphosphatase that hydrolyzes fatty acyl-CoA to yield acyl-4'-phosphopantetheine and adenosine 3',5'-bisphosphate. Mediates the hydrolysis of a wide range of CoA esters, including choloyl-CoA and branched-chain fatty-acyl-CoA esters and at low substrate concentrations medium and long-chain fatty-acyl-CoA esters are the primary substrates. Highest activity seen with medium-chain acyl-CoA esters and higher rates of activity seen with the unsaturated acyl-CoA esters compared with the saturated esters. Exhibits decapping activity towards dpCoA-capped RNAs in vitro. This Xenopus laevis (African clawed frog) protein is Acyl-coenzyme A diphosphatase NUDT19 (nudt19).